The primary structure comprises 138 residues: Chorion protein S16 (138 aa).

The first 20 residues, methionine 1–alanine 20, serve as a signal peptide directing secretion.

It belongs to the chorion protein S16 family.

The protein localises to the secreted. Chorion membrane (egg shell) protein; plays a role in protecting the egg from the environment. The protein is Chorion protein S16 (Cp16) of Drosophila melanogaster (Fruit fly).